An 82-amino-acid polypeptide reads, in one-letter code: UPF0213 protein MW0443 (82 aa).

The region spanning 2–77 is the GIY-YIG domain; it reads DSHFVYIVKC…KTYTRQKKLR (76 aa).

The protein belongs to the UPF0213 family.

This is UPF0213 protein MW0443 from Staphylococcus aureus (strain MW2).